Consider the following 415-residue polypeptide: Squalene synthase 12 (415 aa).

Helical transmembrane passes span 281–301 (AIFR…ALCF) and 391–411 (LIAI…SNLL).

It belongs to the phytoene/squalene synthase family. Mg(2+) serves as cofactor. It depends on Mn(2+) as a cofactor.

The protein resides in the endoplasmic reticulum membrane. The catalysed reaction is 2 (2E,6E)-farnesyl diphosphate + NADH + H(+) = squalene + 2 diphosphate + NAD(+). It catalyses the reaction 2 (2E,6E)-farnesyl diphosphate + NADPH + H(+) = squalene + 2 diphosphate + NADP(+). It participates in terpene metabolism; lanosterol biosynthesis; lanosterol from farnesyl diphosphate: step 1/3. Component of the triterpene saponins (e.g. ginsenosides or panaxosides) and phytosterols biosynthetic pathways. Catalyzes the biosynthesis of squalene. The protein is Squalene synthase 12 of Panax ginseng (Korean ginseng).